Consider the following 261-residue polypeptide: Protein FAM216A (261 aa).

The disordered stretch occupies residues 1–52; the sequence is MPSRCPGVAGPPALARTEGSEGSAGQSYHQNSKGTGEQHKAERIKEGHRMSS. A compositionally biased stretch (polar residues) spans 23-35; the sequence is SAGQSYHQNSKGT. The segment covering 36-49 has biased composition (basic and acidic residues); it reads GEQHKAERIKEGHR.

Belongs to the FAM216 family.

This chain is Protein FAM216A (Fam216a), found in Rattus norvegicus (Rat).